A 226-amino-acid chain; its full sequence is Protein AF-9 homolog (226 aa).

The region spanning 8–169 is the YEATS domain; the sequence is RIKTLSVSRP…EEFFKILMSR (162 aa). Residues 187–224 are a coiled coil; sequence QLEQEEIDRIEIGIEKVDKEIDELKQKLENLVKQEAIN.

Component of the SWR1 chromatin-remodeling complex composed of at least ACT1, ARP4, RVB1, RVB2, ARP6, YAF9, VPS71, VPS72, SWC3, SWC4, SWC5, SWC7 and SWR1, and perhaps BDF1. Component of the NuA4 histone acetyltransferase complex composed of at least ACT1, ARP4, YAF9, VID21, SWC4, EAF3, EAF5, EAF6, EAF7, EPL1, ESA1, TRA1 and YNG2. Interacts with SWC4.

The protein resides in the cytoplasm. The protein localises to the nucleus. In terms of biological role, component of the SWR1 complex which mediates the ATP-dependent exchange of histone H2A for the H2A variant HZT1 leading to transcriptional regulation of selected genes by chromatin remodeling. Component of the NuA4 histone acetyltransferase complex which is involved in transcriptional activation of selected genes principally by acetylation of nucleosomal histones H4 and H2A. The NuA4 complex is also involved in DNA repair. Yaf9 may also be required for viability in conditions in which the structural integrity of the spindle is compromised. This Saccharomyces cerevisiae (strain ATCC 204508 / S288c) (Baker's yeast) protein is Protein AF-9 homolog (YAF9).